A 504-amino-acid polypeptide reads, in one-letter code: Pyruvate kinase (504 aa).

Arginine 53 contributes to the substrate binding site. K(+) is bound by residues asparagine 55, serine 57, aspartate 88, and threonine 89. 55–58 (NFSH) is an ATP binding site. ATP contacts are provided by arginine 95 and lysine 181. Glutamate 246 is a Mg(2+) binding site. Substrate is bound by residues glycine 269, aspartate 270, and threonine 302. Aspartate 270 provides a ligand contact to Mg(2+).

The protein belongs to the pyruvate kinase family. As to quaternary structure, homotetramer. Requires Mg(2+) as cofactor. K(+) is required as a cofactor.

It localises to the cytoplasm. The catalysed reaction is pyruvate + ATP = phosphoenolpyruvate + ADP + H(+). It functions in the pathway carbohydrate degradation; glycolysis; pyruvate from D-glyceraldehyde 3-phosphate: step 5/5. The protein is Pyruvate kinase (CDC19) of Candida albicans (strain SC5314 / ATCC MYA-2876) (Yeast).